Here is a 512-residue protein sequence, read N- to C-terminus: MNVTALNLIPGQLSLAQLRAIYQQPVTLRLDDSATAQIEASVACVEQILAENRTAYGINTGFGLLASTRIASEDLENLQRSLVLSHAAGVGEPISDALVRLVMVLKVNSLSRGFSGIRRQVIDALIALINAEVYPHIPLKGSVGASGDLAPLAHMSLVLLGEGKARYKGEWLEATEALKVAGLTPLTLAAKEGLALLNGTQVSTAYALRGLFEGEDLFAGALACGGLTVEAVLGSRSPFDARIHAARGQRGQIDSAAAYRDLLGESSQVSQSHQNCDKVQDPYSLRCQPQVMGACLTQFRQAAEVLVVEANAVSDNPLVFAAEGDVISGGNFHAEPVAMAADNMALAIAEIGSLSERRISLMMDKHMSQLPPFLVGNGGVNSGFMIAQVTAAALASENKALAHPHSVDSLPTSANQEDHVSMAPAAGKRLWEMAENTRGILAVEWLAACQGLDLREGLKTSPKLEKARGILRDKVAFYDKDRFFAPDINAASELLATRCLNELVPANLLPSL.

The 5-imidazolinone (Ala-Gly) cross-link spans 145–147 (ASG). A 2,3-didehydroalanine (Ser) modification is found at Ser-146.

The protein belongs to the PAL/histidase family. Post-translationally, contains an active site 4-methylidene-imidazol-5-one (MIO), which is formed autocatalytically by cyclization and dehydration of residues Ala-Ser-Gly.

Its subcellular location is the cytoplasm. The enzyme catalyses L-histidine = trans-urocanate + NH4(+). Its pathway is amino-acid degradation; L-histidine degradation into L-glutamate; N-formimidoyl-L-glutamate from L-histidine: step 1/3. This Pseudomonas fluorescens (strain SBW25) protein is Histidine ammonia-lyase.